A 411-amino-acid polypeptide reads, in one-letter code: Arginine deiminase (411 aa).

Cysteine 401 (amidino-cysteine intermediate) is an active-site residue.

The protein belongs to the arginine deiminase family.

The protein localises to the cytoplasm. The catalysed reaction is L-arginine + H2O = L-citrulline + NH4(+). It participates in amino-acid degradation; L-arginine degradation via ADI pathway; carbamoyl phosphate from L-arginine: step 1/2. The protein is Arginine deiminase of Streptococcus pyogenes serotype M49 (strain NZ131).